A 397-amino-acid polypeptide reads, in one-letter code: Pyruvate dehydrogenase E1 component subunit alpha, mitochondrial (397 aa).

Pyruvate-binding residues include His-98, Tyr-124, Arg-125, Gly-173, Val-175, Asp-204, Gly-205, Ala-206, Asn-233, and Tyr-235. Thiamine diphosphate contacts are provided by Tyr-124, Arg-125, Gly-173, Val-175, Asp-204, Gly-205, Ala-206, and Asn-233. Asp-204 contacts Mg(2+). Mg(2+) contacts are provided by Asn-233 and Tyr-235. His-299 serves as a coordination point for thiamine diphosphate.

Tetramer of 2 alpha and 2 beta subunits. Thiamine diphosphate serves as cofactor. It depends on Mg(2+) as a cofactor.

It is found in the mitochondrion matrix. It carries out the reaction N(6)-[(R)-lipoyl]-L-lysyl-[protein] + pyruvate + H(+) = N(6)-[(R)-S(8)-acetyldihydrolipoyl]-L-lysyl-[protein] + CO2. With respect to regulation, E1 activity is regulated by phosphorylation (inactivation) and dephosphorylation (activation) of the alpha subunit. The pyruvate dehydrogenase complex catalyzes the overall conversion of pyruvate to acetyl-CoA and CO(2). It contains multiple copies of three enzymatic components: pyruvate dehydrogenase (E1), dihydrolipoamide acetyltransferase (E2) and lipoamide dehydrogenase (E3). This is Pyruvate dehydrogenase E1 component subunit alpha, mitochondrial from Pisum sativum (Garden pea).